Reading from the N-terminus, the 99-residue chain is HssA/B-like protein 42 (99 aa).

The disordered stretch occupies residues 1 to 29; the sequence is MTLFSSISSMSTSMSGSKSSISSFGSGTS.

Belongs to the hssA/B family.

The protein is HssA/B-like protein 42 (hssl42) of Dictyostelium discoideum (Social amoeba).